A 501-amino-acid polypeptide reads, in one-letter code: Phenylalanine--tRNA ligase alpha subunit (501 aa).

L-phenylalanine contacts are provided by Thr340 and Phe423. Glu425 provides a ligand contact to Mg(2+). Phe448 contacts L-phenylalanine.

The protein belongs to the class-II aminoacyl-tRNA synthetase family. Phe-tRNA synthetase alpha subunit type 2 subfamily. As to quaternary structure, tetramer of two alpha and two beta subunits. Mg(2+) serves as cofactor.

The protein resides in the cytoplasm. It carries out the reaction tRNA(Phe) + L-phenylalanine + ATP = L-phenylalanyl-tRNA(Phe) + AMP + diphosphate + H(+). The protein is Phenylalanine--tRNA ligase alpha subunit of Methanococcus vannielii (strain ATCC 35089 / DSM 1224 / JCM 13029 / OCM 148 / SB).